The primary structure comprises 148 residues: Ubiquitin-conjugating enzyme E2 11 (148 aa).

The UBC core domain maps to M1–M147. C85 acts as the Glycyl thioester intermediate in catalysis.

This sequence belongs to the ubiquitin-conjugating enzyme family. Interacts with the E3 ubiquitin-protein ligases MBR1 and MBR2. In terms of tissue distribution, ubiquitously expressed. Mainly in petals.

The catalysed reaction is S-ubiquitinyl-[E1 ubiquitin-activating enzyme]-L-cysteine + [E2 ubiquitin-conjugating enzyme]-L-cysteine = [E1 ubiquitin-activating enzyme]-L-cysteine + S-ubiquitinyl-[E2 ubiquitin-conjugating enzyme]-L-cysteine.. It functions in the pathway protein modification; protein ubiquitination. Accepts the ubiquitin from the E1 complex and catalyzes its covalent attachment to other proteins. Mediates the selective degradation of short-lived and abnormal proteins. This is Ubiquitin-conjugating enzyme E2 11 (UBC11) from Arabidopsis thaliana (Mouse-ear cress).